Consider the following 202-residue polypeptide: Protein lin-28 homolog A (202 aa).

Disordered stretches follow at residues 1 to 33 and 100 to 128; these read MPPANPHLNHTGGCTKTEEEEAASSEEDSGSFH and SLQVTGPGGAPCVGSEKKPKGTQKRRSKG. Acidic residues predominate over residues 18–29; that stretch reads EEEEAASSEEDS. The CSD domain maps to 33–106; the sequence is HGSGVCKWFN…GLESLQVTGP (74 aa). Residues 107 to 130 are flexible linker; that stretch reads GGAPCVGSEKKPKGTQKRRSKGDR. 2 consecutive CCHC-type zinc fingers follow at residues 129 to 146 and 151 to 168; these read DRCFNCGGPNHHAKECQL and KKCHFCQSISHMVANCPI. Cys131, Cys134, His139, Cys144, Cys153, Cys156, His161, and Cys166 together coordinate Zn(2+). Positions 170–202 are disordered; the sequence is AQQLSPGSQGKSTTSTGEEEDMSHTPLLPESTD. Over residues 171–185 the composition is skewed to polar residues; it reads QQLSPGSQGKSTTST. A Phosphoserine modification is found at Ser174.

This sequence belongs to the lin-28 family. Monomer.

It localises to the cytoplasm. Its subcellular location is the rough endoplasmic reticulum. It is found in the P-body. The protein localises to the stress granule. The protein resides in the nucleus. It localises to the nucleolus. Functionally, RNA-binding protein that inhibits processing of pre-let-7 miRNAs and regulates translation of mRNAs that control developmental timing, pluripotency and metabolism. Seems to recognize a common structural G-quartet (G4) feature in its miRNA and mRNA targets. 'Translational enhancer' that drives specific mRNAs to polysomes and increases the efficiency of protein synthesis. Its association with the translational machinery and target mRNAs results in an increased number of initiation events per molecule of mRNA and, indirectly, in mRNA stabilization. Suppressor of microRNA (miRNA) biogenesis, including that of let-7. Binds specific target miRNA precursors (pre-miRNAs), recognizing an 5'-GGAG-3' motif found in their terminal loop, and recruits uridylyltransferase. This results in the terminal uridylation of target pre-miRNAs. Uridylated pre-miRNAs fail to be processed by Dicer and undergo degradation. Localized to the periendoplasmic reticulum area, binds to a large number of spliced mRNAs and inhibits the translation of mRNAs destined for the ER, reducing the synthesis of transmembrane proteins, ER or Golgi lumen proteins, and secretory proteins. Binds to and enhances the translation of mRNAs for several metabolic enzymes, increasing glycolysis and oxidative phosphorylation. Which, with the let-7 repression may enhance tissue repair in adult tissue. The polypeptide is Protein lin-28 homolog A (lin28a) (Danio rerio (Zebrafish)).